We begin with the raw amino-acid sequence, 166 residues long: Probable histone deacetylase complex subunit SAP18 (166 aa).

The tract at residues 143–166 (GRRFNNREQGDRFDHRQRQRSPIR) is disordered. Residues 147–158 (NNREQGDRFDHR) are compositionally biased toward basic and acidic residues.

Belongs to the SAP18 family. As to quaternary structure, interacts with SIN3 and histone deacetylase.

In terms of biological role, acts in transcription repression. Involved in the tethering of the SIN3 complex to core histone proteins. The sequence is that of Probable histone deacetylase complex subunit SAP18 from Caenorhabditis elegans.